Consider the following 314-residue polypeptide: Aryldialkylphosphatase (314 aa).

Fe cation-binding residues include His22, His24, and Lys137. The Co(2+) site is built by Lys137, His170, and His199. Lys137 is subject to N6-carboxylysine. Asp256 is a binding site for Fe cation.

Belongs to the metallo-dependent hydrolases superfamily. Phosphotriesterase family. As to quaternary structure, homodimer. Co(2+) serves as cofactor. It depends on Fe cation as a cofactor.

The catalysed reaction is An aryl dialkyl phosphate + H2O = dialkyl phosphate + an aryl alcohol.. Inactivated by EDTA and o-phenanthroline. Has a low paraoxonase activity. Also active, but with a lower activity, against other organo-phosphorus insecticides such as Dursban, Coumaphos, pNP-butanoate or parathion. This chain is Aryldialkylphosphatase (php), found in Saccharolobus solfataricus (strain ATCC 35092 / DSM 1617 / JCM 11322 / P2) (Sulfolobus solfataricus).